A 132-amino-acid chain; its full sequence is Phosphoribosyl-AMP cyclohydrolase (132 aa).

Aspartate 82 is a binding site for Mg(2+). Cysteine 83 lines the Zn(2+) pocket. Aspartate 84 and aspartate 86 together coordinate Mg(2+). 2 residues coordinate Zn(2+): cysteine 100 and cysteine 107.

It belongs to the PRA-CH family. In terms of assembly, homodimer. It depends on Mg(2+) as a cofactor. Zn(2+) is required as a cofactor.

The protein localises to the cytoplasm. It catalyses the reaction 1-(5-phospho-beta-D-ribosyl)-5'-AMP + H2O = 1-(5-phospho-beta-D-ribosyl)-5-[(5-phospho-beta-D-ribosylamino)methylideneamino]imidazole-4-carboxamide. It participates in amino-acid biosynthesis; L-histidine biosynthesis; L-histidine from 5-phospho-alpha-D-ribose 1-diphosphate: step 3/9. Catalyzes the hydrolysis of the adenine ring of phosphoribosyl-AMP. This chain is Phosphoribosyl-AMP cyclohydrolase, found in Dechloromonas aromatica (strain RCB).